The primary structure comprises 609 residues: Myoneurin (609 aa).

Residues 24 to 89 (CDCTILIGDF…IYSGNLNYDS (66 aa)) form the BTB domain. Short sequence motifs (nuclear localization signal) lie at residues 172–188 (KKSQKIKRWKRPLRSHQ) and 257–262 (QKPAKL). 8 C2H2-type zinc fingers span residues 301 to 323 (PVCNTCGKVFSEASSLRRHMRIH), 329 to 351 (YVCHLCAKAFTQCNQLKTHVRTH), 357 to 380 (YQCKKCDKGFAQKCQLVFHSRMHH), 386 to 408 (YKCDVCNLQFATSSNLKIHARKH), 414 to 436 (YVCDRCGQRFAQASTLTYHVRRH), 442 to 464 (YVCDTCGKAFAVSSSLITHARKH), 470 to 492 (YICGVCRKSFISSGELNKHFRSH), and 498 to 521 (FVCEVCGNSYTDVKNLKKHKLKMH). The disordered stretch occupies residues 528–553 (IEMKSAENSSSSEDSTTKSPEPESLE). A compositionally biased stretch (low complexity) spans 533–546 (AENSSSSEDSTTKS).

The protein localises to the nucleus. The sequence is that of Myoneurin (mynn) from Xenopus laevis (African clawed frog).